The sequence spans 418 residues: Actin-related protein 3B (418 aa).

The protein belongs to the actin family. ARP3 subfamily. In terms of assembly, interacts with the Arp2/3 complex composed of ARP2, ARP3, ARPC1B, ARPC1B/p41-ARC, ARPC2/p34-ARC, ARPC3/p21-ARC, ARPC4/p20-ARC and ARPC5/p16-ARC.

The protein resides in the cytoplasm. The protein localises to the cytoskeleton. It is found in the cell projection. Functionally, plays a role in the organization of the actin cytoskeleton. May function as ATP-binding component of the Arp2/3 complex which is involved in regulation of actin polymerization and together with an activating nucleation-promoting factor (NPF) mediates the formation of branched actin networks. May decrease the metastatic potential of tumors. The polypeptide is Actin-related protein 3B (Actr3b) (Mus musculus (Mouse)).